A 1026-amino-acid polypeptide reads, in one-letter code: DNA cross-link repair 1A protein (1026 aa).

The tract at residues Met-1–Pro-189 is nuclear localization region. Positions Glu-12 to Thr-110 are disordered. The span at Ser-34 to Cys-65 shows a compositional bias: basic and acidic residues. Positions Ser-71–Ser-82 are enriched in low complexity. Positions Lys-98 to Lys-107 are enriched in basic residues. Residues Asp-118–Pro-148 form a UBZ4-type zinc finger. Residues Cys-121, Cys-124, His-139, and Cys-143 each contribute to the Zn(2+) site. Residues Lys-359, Lys-434, and Lys-522 each participate in a glycyl lysine isopeptide (Lys-Gly) (interchain with G-Cter in SUMO2) cross-link. The segment at Ser-401–Ala-602 is nuclear focus formation. 3 disordered regions span residues Pro-474–Val-542, Glu-560–Lys-590, and Ala-602–Gly-651. Residues Ser-527–Lys-540 show a composition bias toward low complexity. The span at Glu-569 to Gln-581 shows a compositional bias: polar residues. Ser-574 and Ser-578 each carry phosphoserine. The span at Arg-619–Thr-628 shows a compositional bias: basic residues. Lys-657 participates in a covalent cross-link: Glycyl lysine isopeptide (Lys-Gly) (interchain with G-Cter in SUMO2).

It belongs to the DNA repair metallo-beta-lactamase (DRMBL) family. As to quaternary structure, binds constitutively to TP53BP1. Binds CDC27, which is itself a component of the anaphase promoting complex (APC). Binds PIAS1.

The protein resides in the nucleus. The catalysed reaction is a beta-lactam + H2O = a substituted beta-amino acid. Functionally, may be required for DNA interstrand cross-link repair. Also required for checkpoint mediated cell cycle arrest in early prophase in response to mitotic spindle poisons. This Mus musculus (Mouse) protein is DNA cross-link repair 1A protein (Dclre1a).